The following is a 232-amino-acid chain: Enolase-phosphatase E1 (232 aa).

The protein belongs to the HAD-like hydrolase superfamily. MasA/MtnC family. Monomer. Requires Mg(2+) as cofactor.

It carries out the reaction 5-methylsulfanyl-2,3-dioxopentyl phosphate + H2O = 1,2-dihydroxy-5-(methylsulfanyl)pent-1-en-3-one + phosphate. It participates in amino-acid biosynthesis; L-methionine biosynthesis via salvage pathway; L-methionine from S-methyl-5-thio-alpha-D-ribose 1-phosphate: step 3/6. The protein operates within amino-acid biosynthesis; L-methionine biosynthesis via salvage pathway; L-methionine from S-methyl-5-thio-alpha-D-ribose 1-phosphate: step 4/6. Bifunctional enzyme that catalyzes the enolization of 2,3-diketo-5-methylthiopentyl-1-phosphate (DK-MTP-1-P) into the intermediate 2-hydroxy-3-keto-5-methylthiopentenyl-1-phosphate (HK-MTPenyl-1-P), which is then dephosphorylated to form the acireductone 1,2-dihydroxy-3-keto-5-methylthiopentene (DHK-MTPene). The sequence is that of Enolase-phosphatase E1 from Xanthomonas axonopodis pv. citri (strain 306).